Here is a 154-residue protein sequence, read N- to C-terminus: Probable biofilm-surface layer protein B (154 aa).

The first 30 residues, 1-30, serve as a signal peptide directing secretion; that stretch reads MLKRTSFVSSLFISSAVLLSILLPSGQAHA.

This sequence belongs to the BslA/BslB family. As to quaternary structure, monomer in vitro.

Its subcellular location is the secreted. In terms of biological role, has a minor role in biofilm architecture. May contribute to the surface hydrophobicity. In Bacillus subtilis (strain 168), this protein is Probable biofilm-surface layer protein B.